Consider the following 95-residue polypeptide: Protein NCBP2AS2 homolog (95 aa).

The polypeptide is Protein NCBP2AS2 homolog (Ixodes scapularis (Black-legged tick)).